We begin with the raw amino-acid sequence, 235 residues long: uncharacterized protein (235 aa).

Disordered regions lie at residues 1-36 (MGMLAPGPLQGRRPRKGHKGQEDAVAPGCKASGRGS) and 213-235 (VKTRKSKRRSGEGSHLTTSILEQ).

This is an uncharacterized protein from Homo sapiens (Human).